The following is a 539-amino-acid chain: CTP synthase (539 aa).

Residues 1–272 form an amidoligase domain region; the sequence is MTLRSKMTKY…AQIILSHFKI (272 aa). Position 19 (S19) interacts with CTP. S19 serves as a coordination point for UTP. 20 to 25 provides a ligand contact to ATP; that stretch reads GLGKGV. Y60 provides a ligand contact to L-glutamine. An ATP-binding site is contributed by D77. 2 residues coordinate Mg(2+): D77 and E147. CTP-binding positions include 154–156, 193–198, and K229; these read DIE and KSKPTQ. UTP is bound by residues 193 to 198 and K229; that span reads KSKPTQ. One can recognise a Glutamine amidotransferase type-1 domain in the interval 298–539; the sequence is KILMVGKYVE…SFLRVLIKNN (242 aa). G360 lines the L-glutamine pocket. C387 functions as the Nucleophile; for glutamine hydrolysis in the catalytic mechanism. Residues 388 to 391, E410, and R469 contribute to the L-glutamine site; that span reads LGFQ. Residues H514 and E516 contribute to the active site.

This sequence belongs to the CTP synthase family. Homotetramer.

The catalysed reaction is UTP + L-glutamine + ATP + H2O = CTP + L-glutamate + ADP + phosphate + 2 H(+). It carries out the reaction L-glutamine + H2O = L-glutamate + NH4(+). It catalyses the reaction UTP + NH4(+) + ATP = CTP + ADP + phosphate + 2 H(+). The protein operates within pyrimidine metabolism; CTP biosynthesis via de novo pathway; CTP from UDP: step 2/2. Allosterically activated by GTP, when glutamine is the substrate; GTP has no effect on the reaction when ammonia is the substrate. The allosteric effector GTP functions by stabilizing the protein conformation that binds the tetrahedral intermediate(s) formed during glutamine hydrolysis. Inhibited by the product CTP, via allosteric rather than competitive inhibition. Its function is as follows. Catalyzes the ATP-dependent amination of UTP to CTP with either L-glutamine or ammonia as the source of nitrogen. Regulates intracellular CTP levels through interactions with the four ribonucleotide triphosphates. This is CTP synthase from Mycoplasmopsis pulmonis (strain UAB CTIP) (Mycoplasma pulmonis).